A 1316-amino-acid chain; its full sequence is DNA-directed RNA polymerase subunit beta' (1316 aa).

Zn(2+)-binding residues include cysteine 60, cysteine 62, cysteine 75, and cysteine 78. Mg(2+) is bound by residues aspartate 535, aspartate 537, and aspartate 539. Zn(2+)-binding residues include cysteine 891, cysteine 968, cysteine 975, and cysteine 978.

The protein belongs to the RNA polymerase beta' chain family. In terms of assembly, the RNAP catalytic core consists of 2 alpha, 1 beta, 1 beta' and 1 omega subunit. When a sigma factor is associated with the core the holoenzyme is formed, which can initiate transcription. It depends on Mg(2+) as a cofactor. Requires Zn(2+) as cofactor.

It carries out the reaction RNA(n) + a ribonucleoside 5'-triphosphate = RNA(n+1) + diphosphate. DNA-dependent RNA polymerase catalyzes the transcription of DNA into RNA using the four ribonucleoside triphosphates as substrates. This Mycobacterium leprae (strain Br4923) protein is DNA-directed RNA polymerase subunit beta'.